We begin with the raw amino-acid sequence, 696 residues long: Two-component response regulator ORR22 (696 aa).

Residues 27–142 form the Response regulatory domain; that stretch reads RVLAVDDDPV…ELRNIWQHVV (116 aa). Position 78 is a 4-aspartylphosphate (D78). A disordered region spans residues 154 to 214; sequence LDFSKECNKP…DYQENDEPSA (61 aa). The segment covering 176–185 has biased composition (polar residues); it reads TCGSSDQNGR. A compositionally biased stretch (acidic residues) spans 195-211; sequence GEDDDEGDDNDYQENDE. Residues 214–273 constitute a DNA-binding region (myb-like GARP); sequence AAKKPRVVWSVELHRKFVAAVNQLGIDKAVPKRILELMNVEKLTRENVASHLQKYRLYLK.

The protein belongs to the ARR family. Type-B subfamily. Two-component system major event consists of a His-to-Asp phosphorelay between a sensor histidine kinase (HK) and a response regulator (RR). In plants, the His-to-Asp phosphorelay involves an additional intermediate named Histidine-containing phosphotransfer protein (HPt). This multistep phosphorelay consists of a His-Asp-His-Asp sequential transfer of a phosphate group between first a His and an Asp of the HK protein, followed by the transfer to a conserved His of the HPt protein and finally the transfer to an Asp in the receiver domain of the RR protein.

It localises to the nucleus. Its function is as follows. Transcriptional activator that binds specific DNA sequence. Functions as a response regulator involved in His-to-Asp phosphorelay signal transduction system. Phosphorylation of the Asp residue in the receiver domain activates the ability of the protein to promote the transcription of target genes. May directly activate some type-A response regulators in response to cytokinins. Functions as a response regulator in response to cytokinins. The sequence is that of Two-component response regulator ORR22 from Oryza sativa subsp. japonica (Rice).